Reading from the N-terminus, the 230-residue chain is Ureidoacrylate amidohydrolase RutB (230 aa).

D24 serves as the catalytic Proton acceptor. Residue K133 is part of the active site. Residue C166 is the Nucleophile of the active site.

It belongs to the isochorismatase family. RutB subfamily.

The catalysed reaction is (Z)-3-ureidoacrylate + H2O + H(+) = (Z)-3-aminoacrylate + NH4(+) + CO2. It catalyses the reaction (Z)-3-ureidoacrylate + H2O = (Z)-3-aminoacrylate + carbamate + H(+). The enzyme catalyses (Z)-2-methylureidoacrylate + H2O + H(+) = (Z)-2-methylaminoacrylate + NH4(+) + CO2. Functionally, hydrolyzes ureidoacrylate to form aminoacrylate and carbamate. The carbamate hydrolyzes spontaneously, thereby releasing one of the nitrogen atoms of the pyrimidine ring as ammonia and one of its carbon atoms as CO2. This is Ureidoacrylate amidohydrolase RutB from Enterobacter sp. (strain 638).